The sequence spans 287 residues: 4-diphosphocytidyl-2-C-methyl-D-erythritol kinase (287 aa).

Lys-14 is an active-site residue. 96-106 (PWGAGLGGGSS) provides a ligand contact to ATP. Asp-138 is an active-site residue.

Belongs to the GHMP kinase family. IspE subfamily.

It catalyses the reaction 4-CDP-2-C-methyl-D-erythritol + ATP = 4-CDP-2-C-methyl-D-erythritol 2-phosphate + ADP + H(+). It functions in the pathway isoprenoid biosynthesis; isopentenyl diphosphate biosynthesis via DXP pathway; isopentenyl diphosphate from 1-deoxy-D-xylulose 5-phosphate: step 3/6. Functionally, catalyzes the phosphorylation of the position 2 hydroxy group of 4-diphosphocytidyl-2C-methyl-D-erythritol. This chain is 4-diphosphocytidyl-2-C-methyl-D-erythritol kinase, found in Methylibium petroleiphilum (strain ATCC BAA-1232 / LMG 22953 / PM1).